A 1635-amino-acid polypeptide reads, in one-letter code: U3 small nucleolar RNA-associated protein 10 (1635 aa).

Residues 781–803 (TTSMDAPSDESTKRRRRSSSSTV) are disordered. Helical transmembrane passes span 1141-1161 (PELL…TVAG) and 1288-1308 (IALS…SFMV).

Belongs to the HEATR1/UTP10 family. In terms of assembly, component of the ribosomal small subunit (SSU) processome.

It localises to the nucleus. The protein localises to the nucleolus. Its subcellular location is the membrane. Its function is as follows. Involved in nucleolar processing of pre-18S ribosomal RNA. Involved in ribosome biosynthesis. The sequence is that of U3 small nucleolar RNA-associated protein 10 from Yarrowia lipolytica (strain CLIB 122 / E 150) (Yeast).